We begin with the raw amino-acid sequence, 101 residues long: Transcription factor ILI2 (101 aa).

A disordered region spans residues 1 to 22 (MSSSRRSRTSSRLAAAPPPTDE). In terms of domain architecture, bHLH spans 8-63 (RTSSRLAAAPPPTDEQMAELISKLQAVLPTRGGEANAKQASSAEVLQEACRYIRRL).

This sequence belongs to the bHLH protein family.

Atypical and probable non DNA-binding bHLH transcription factor that integrates multiple signaling pathways to regulate cell elongation and plant development. This is Transcription factor ILI2 (ILI2) from Oryza sativa subsp. indica (Rice).